Consider the following 241-residue polypeptide: Carboxy-S-adenosyl-L-methionine synthase (241 aa).

Residues Tyr38, 63–65 (GCS), 88–89 (DN), 116–117 (DI), Asn131, and Arg198 each bind S-adenosyl-L-methionine.

Belongs to the class I-like SAM-binding methyltransferase superfamily. Cx-SAM synthase family. As to quaternary structure, homodimer.

The enzyme catalyses prephenate + S-adenosyl-L-methionine = carboxy-S-adenosyl-L-methionine + 3-phenylpyruvate + H2O. In terms of biological role, catalyzes the conversion of S-adenosyl-L-methionine (SAM) to carboxy-S-adenosyl-L-methionine (Cx-SAM). The protein is Carboxy-S-adenosyl-L-methionine synthase of Actinobacillus pleuropneumoniae serotype 3 (strain JL03).